Here is a 355-residue protein sequence, read N- to C-terminus: UDP-glucose 4-epimerase uge1 (355 aa).

Residue 8–39 (TVLVTGGAGYIGSHTCVVLLEKGYDVVIVDNL) coordinates NAD(+).

The protein belongs to the NAD(P)-dependent epimerase/dehydratase family. It depends on NAD(+) as a cofactor.

The enzyme catalyses UDP-alpha-D-glucose = UDP-alpha-D-galactose. It functions in the pathway carbohydrate metabolism; galactose metabolism. Its function is as follows. Major UDP-glucose/-galactose 4-epimerase under glucose-rich conditions involved in protein galactosylation. The chain is UDP-glucose 4-epimerase uge1 (uge1) from Schizosaccharomyces pombe (strain 972 / ATCC 24843) (Fission yeast).